Reading from the N-terminus, the 375-residue chain is Platelet-derived growth factor receptor-like protein (375 aa).

A signal peptide spans 1 to 21 (MKVWLLLGLLLVHEALEDVTG). Residues 22-64 (QHLPKNKRPKEPGENRIKPTNKKVKPKIPKMKDRDSANSAPKT) are disordered. The span at 40–50 (PTNKKVKPKIP) shows a compositional bias: basic residues. The 98-residue stretch at 62-159 (PKTQSIMMQV…GYICRKDEAK (98 aa)) folds into the Ig-like C2-type 1 domain. An intrachain disulfide couples Cys96 to Cys143. Residues Asn132 and Asn219 are each glycosylated (N-linked (GlcNAc...) asparagine). Positions 272 to 375 (PSTTILASSN…TTVATTVEFS (104 aa)) constitute an Ig-like C2-type 2 domain. An intrachain disulfide couples Cys293 to Cys357.

As to quaternary structure, forms a complex composed of PDGFRL, TNK2 and GRB2. In terms of tissue distribution, expressed in colon, lung and liver.

The protein resides in the secreted. This Homo sapiens (Human) protein is Platelet-derived growth factor receptor-like protein (PDGFRL).